Reading from the N-terminus, the 278-residue chain is Large ribosomal subunit protein uL2 (278 aa).

Over residues 210–219 (RKRWLGKRPQ) the composition is skewed to basic residues. The interval 210 to 278 (RKRWLGKRPQ…LIIRHRKGSK (69 aa)) is disordered. Residues 258–270 (KTRDVKKASEKLI) are compositionally biased toward basic and acidic residues.

Belongs to the universal ribosomal protein uL2 family. As to quaternary structure, part of the 50S ribosomal subunit. Forms a bridge to the 30S subunit in the 70S ribosome.

Functionally, one of the primary rRNA binding proteins. Required for association of the 30S and 50S subunits to form the 70S ribosome, for tRNA binding and peptide bond formation. It has been suggested to have peptidyltransferase activity; this is somewhat controversial. Makes several contacts with the 16S rRNA in the 70S ribosome. The chain is Large ribosomal subunit protein uL2 from Lactobacillus acidophilus (strain ATCC 700396 / NCK56 / N2 / NCFM).